Consider the following 65-residue polypeptide: Large ribosomal subunit protein bL31 (65 aa).

Cys16, Cys18, Cys36, and Cys39 together coordinate Zn(2+).

It belongs to the bacterial ribosomal protein bL31 family. Type A subfamily. Part of the 50S ribosomal subunit. Zn(2+) serves as cofactor.

Functionally, binds the 23S rRNA. The protein is Large ribosomal subunit protein bL31 of Brevibacillus brevis (strain 47 / JCM 6285 / NBRC 100599).